Consider the following 591-residue polypeptide: V-type ATP synthase alpha chain (591 aa).

233 to 240 (GPFGAGKT) contributes to the ATP binding site.

Belongs to the ATPase alpha/beta chains family.

The catalysed reaction is ATP + H2O + 4 H(+)(in) = ADP + phosphate + 5 H(+)(out). Its function is as follows. Produces ATP from ADP in the presence of a proton gradient across the membrane. The V-type alpha chain is a catalytic subunit. The protein is V-type ATP synthase alpha chain of Streptococcus pyogenes serotype M12 (strain MGAS2096).